The chain runs to 245 residues: 5-oxoprolinase subunit A (245 aa).

This sequence belongs to the LamB/PxpA family. In terms of assembly, forms a complex composed of PxpA, PxpB and PxpC.

The enzyme catalyses 5-oxo-L-proline + ATP + 2 H2O = L-glutamate + ADP + phosphate + H(+). In terms of biological role, catalyzes the cleavage of 5-oxoproline to form L-glutamate coupled to the hydrolysis of ATP to ADP and inorganic phosphate. This Serratia proteamaculans (strain 568) protein is 5-oxoprolinase subunit A.